Reading from the N-terminus, the 101-residue chain is Integration host factor subunit alpha (101 aa).

This sequence belongs to the bacterial histone-like protein family. In terms of assembly, heterodimer of an alpha and a beta chain.

This protein is one of the two subunits of integration host factor, a specific DNA-binding protein that functions in genetic recombination as well as in transcriptional and translational control. This is Integration host factor subunit alpha from Saccharophagus degradans (strain 2-40 / ATCC 43961 / DSM 17024).